Consider the following 1036-residue polypeptide: MYKKIDGSKSFVQMEREVLDFWNKNNIVDKSFALNEEGEYFTFYDGPPTANGKPHVGHVLTRVIKDLIPRYKVMKGYKVLRKAGWDTHGLPVELEIEKKLGISGKEEIEKFGVEEFIKECKDSVFTYSSMWKDMSEKLAFWVDMENPYVTYHNDYIESVWWALKQLWNKELLYKGHKVIPYCPRCGTALSSHEVAQGYKDVKEATAFVKFKVKGEENKYILAWTTTPWTLPSNVALAINKNFDYVEVKNNDEVLILAKELVDSVIDGEYEIIKEFKGEDILGLQYEQLLPFYTPEEEAFRVIHGDFVTLSDGTGIVHTAPAYGEDDNIVCKKHGLPMINLVDKEGKFIDCVEPWKGMPVKKADSKIIEYMDEKGILYKSEKFTHSYPHCWRCDTALLYYPTDSWFVRMTSLRDKLLENNNKVNWYPDNIRTGRFGKFLENVIDWGISRDRYWGTPLPIWECECGHRECIGSISELKEKGIDVPEDIELHKPYIDKVKLKCSKCGKEMKRTREVIDCWFDSGSMPFAQHHYPFENKEVFEKTFPAQFISEAVDQTRGWFYTLTAISTAIFDTNPFENCIVLGHVLDKHGLKMSKSKGNVVDPFDVLDSAGADASRWHFYTASAPWLPTRFSPEDVEETQRKFLSTLWNVYSFYVLYADIDKFNPLEYKDFVSENVMDKWIVSKLNSLIKDVEDHMDSYRITQAALAIEDFVDELSNWYVRRNRSRFWSEELREDKIGAYVTLYKVLTTVSLIAAPFVPFITEEIYNNLVRGLDKNALESIHLCNWPKYDENLIQKELEREMDEAYKIVKLGRSARNSVNIKNRQPLSSMLVSIKTLPEYYGRIIKDELNIKDIIFGADLSSYVEFNIKPNLPVLGKAYGRYIPQIRKEITSMDQMKLAQKIKQGEKVIINIDGNEIELNEENLLVTMKGLEGFAFAGEGNIGVVLNTTITDELKEEGQLREILSKIQNMRKEKEFEVADRIKLYVSGNRMLESVVEKFEDIIRKETIAEEVIYNEEREYVDCKINGEDFKIEVEAIK.

The short motif at 48 to 58 is the 'HIGH' region element; it reads PTANGKPHVGH. Residues 590–594 carry the 'KMSKS' region motif; sequence KMSKS. An ATP-binding site is contributed by Lys593.

It belongs to the class-I aminoacyl-tRNA synthetase family. IleS type 2 subfamily. As to quaternary structure, monomer. The cofactor is Zn(2+).

The protein localises to the cytoplasm. The enzyme catalyses tRNA(Ile) + L-isoleucine + ATP = L-isoleucyl-tRNA(Ile) + AMP + diphosphate. Catalyzes the attachment of isoleucine to tRNA(Ile). As IleRS can inadvertently accommodate and process structurally similar amino acids such as valine, to avoid such errors it has two additional distinct tRNA(Ile)-dependent editing activities. One activity is designated as 'pretransfer' editing and involves the hydrolysis of activated Val-AMP. The other activity is designated 'posttransfer' editing and involves deacylation of mischarged Val-tRNA(Ile). This chain is Isoleucine--tRNA ligase, found in Clostridium tetani (strain Massachusetts / E88).